The sequence spans 703 residues: MAQKHPGERRLCGAHRSGGTSLSTSGSSVDPEILSFSGLRDSAETAPNGTRCLKEHSGPKYTQPPNPAHWSDPSHGPPRGPGPPRGGGYPDESETGSEESGVDQELSRENETGYQEDGSPSFLSIPSACNCQGSPGVPEGTYSEEGDGSSSSLCHHCTSPALGEDEELEEEYDDEEPLKFPSDFSRVSSGKKPLSRRQKHRFLIKEDVRDSGRREPKAPGRHRLARKRSQTDKRRGLGLWGVEELCQLGQAGFWWLIELLVLVGEYVETCGHLIYACRKLKGSDLDLFRVWVGVWARRLGGWARMMFQFLSQSFFCVVGLLIRILRVVGAFLLLALALFLGCLQLGWRFSVGLGNRLGWRDKTAWLFSWLGSPALHHCLTLLKDSRPWQQLVRLIQWGWQELPWVKQRTKKQGNAPVASGRYCQPEEEVTRLLTMAGVPEDELNPFHVLGVEATASDTELKKAYRQLAVMVHPDKNHHPRAEEAFKILRAAWDIVSNPERRKEYEMKRMAENELSRSVNEFLSKLQDDLKEAMNTMMCSRCQGKHRRFEMDREPKSARYCAECNRLHPAEEGDFWAESSMLGLKITYFALMDGKVYDITEWAGCQRVGISPDTHRVPYHISFGSRVPGTSGRQRATPESPPADLQDFLSRIFQVPPGPMSNGNFFAAPHPGPGTTSTSRPNSSVPKGEAKPKRRKKVRRPFQR.

Over residues 1 to 11 the composition is skewed to basic and acidic residues; that stretch reads MAQKHPGERRL. Residues 1-229 form a disordered region; sequence MAQKHPGERR…GRHRLARKRS (229 aa). Residues 17-28 show a composition bias toward low complexity; sequence SGGTSLSTSGSS. Residues 75 to 84 are compositionally biased toward pro residues; that stretch reads HGPPRGPGPP. Positions 91–102 are enriched in acidic residues; sequence DESETGSEESGV. Residues 121 to 133 are compositionally biased toward polar residues; the sequence is SFLSIPSACNCQG. The span at 163-176 shows a compositional bias: acidic residues; sequence GEDEELEEEYDDEE. Basic residues predominate over residues 193–202; that stretch reads PLSRRQKHRF. The segment covering 203 to 218 has biased composition (basic and acidic residues); it reads LIKEDVRDSGRREPKA. Basic residues predominate over residues 219-228; it reads PGRHRLARKR. A run of 2 helical transmembrane segments spans residues 305-325 and 327-347; these read MMFQFLSQSFFCVVGLLIRIL and VVGAFLLLALALFLGCLQLGW. The J domain maps to 444–508; the sequence is NPFHVLGVEA…ERRKEYEMKR (65 aa). 2 disordered regions span residues 622 to 643 and 659 to 703; these read FGSRVPGTSGRQRATPESPPAD and MSNG…PFQR. Residues 673–684 show a composition bias toward polar residues; sequence GTTSTSRPNSSV. Residues 691–703 are compositionally biased toward basic residues; it reads PKRRKKVRRPFQR.

In terms of assembly, interacts with the FxxxFxxxF motif of DRD1 via its C-terminal domain.

It is found in the endoplasmic reticulum membrane. Regulates the export of target proteins, such as DRD1, from the endoplasmic reticulum to the cell surface. The polypeptide is DnaJ homolog subfamily C member 14 (Dnajc14) (Mus musculus (Mouse)).